The following is a 701-amino-acid chain: Elongation factor G (701 aa).

In terms of domain architecture, tr-type G spans 8 to 291; that stretch reads SRYRNIGIVA…AVIDYLPAPV (284 aa). GTP contacts are provided by residues 17-24, 89-93, and 143-146; these read AHVDAGKT, DTPGH, and NKMD.

The protein belongs to the TRAFAC class translation factor GTPase superfamily. Classic translation factor GTPase family. EF-G/EF-2 subfamily.

It is found in the cytoplasm. Functionally, catalyzes the GTP-dependent ribosomal translocation step during translation elongation. During this step, the ribosome changes from the pre-translocational (PRE) to the post-translocational (POST) state as the newly formed A-site-bound peptidyl-tRNA and P-site-bound deacylated tRNA move to the P and E sites, respectively. Catalyzes the coordinated movement of the two tRNA molecules, the mRNA and conformational changes in the ribosome. The sequence is that of Elongation factor G from Pseudomonas fluorescens (strain SBW25).